The following is a 925-amino-acid chain: Nuclear pore complex protein Nup107 (925 aa).

M1 bears the N-acetylmethionine mark. 4 positions are modified to phosphoserine: S4, S10, S11, and S37. The segment at 20–66 is disordered; the sequence is TRTARKQSAQKRVLLQASQDENFGNTTPRNQVIPRTPSSFRQPFTPT. Composition is skewed to polar residues over residues 35–49 and 55–66; these read QASQ…TPRN and TPSSFRQPFTPT. 2 positions are modified to phosphothreonine: T46 and T55. 2 positions are modified to phosphoserine: S57 and S58. At R60 the chain carries Asymmetric dimethylarginine; alternate. R60 carries the omega-N-methylarginine; alternate modification. A Phosphothreonine modification is found at T64. Position 68 is an omega-N-methylarginine (R68). Residues S69 and S86 each carry the phosphoserine modification.

It belongs to the nucleoporin Nup84/Nup107 family. In terms of assembly, part of the nuclear pore complex (NPC). Forms part of the Nup160 subcomplex in the nuclear pore which is composed of NUP160, NUP133, NUP107 and Nup96; this complex plays a role in RNA export and in tethering Nup98 and NUP153 to the nucleus. Does not interact with TPR. Interacts with ZNF106. As to expression, ubiquitously expressed in fetal and adult tissues.

Its subcellular location is the nucleus membrane. It localises to the nucleus. The protein resides in the nuclear pore complex. It is found in the chromosome. The protein localises to the centromere. Its subcellular location is the kinetochore. Functionally, plays a role in the nuclear pore complex (NPC) assembly and/or maintenance. Required for the assembly of peripheral proteins into the NPC. May anchor NUP62 to the NPC. Involved in nephrogenesis. The sequence is that of Nuclear pore complex protein Nup107 (NUP107) from Homo sapiens (Human).